Consider the following 1065-residue polypeptide: MKILILGIFLFLCSTPAWAKEKHYYIGIIETTWDYASDHGEKKLISVDTEHSNIYLQNGPDRIGRLYKKALYLQYTDETFRTTIEKPVWLGFLGPIIKAETGDKVYVHLKNLASRPYTFHSHGITYYKEHEGAIYPDNTTDFQRADDKVYPGEQYTYMLLATEEQSPGEGDGNCVTRIYHSHIDAPKDIASGLIGPLIICKKDSLDKEKEKHIDREFVVMFSVVDENFSWYLEDNIKTYCSEPEKVDKDNEDFQESNRMYSVNGYTFGSLPGLSMCAEDRVKWYLFGMGNEVDVHAAFFHGQALTNKNYRIDTINLFPATLFDAYMVAQNPGEWMLSCQNLNHLKAGLQAFFQVQECNKSSSKDNIRGKHVRHYYIAAEEIIWNYAPSGIDIFTKENLTAPGSDSAVFFEQGTTRIGGSYKKLVYREYTDASFTNRKERGPEEEHLGILGPVIWAEVGDTIRVTFHNKGAYPLSIEPIGVRFNKNNEGTYYSPNYNPQSRSVPPSASHVAPTETFTYEWTVPKEVGPTNADPVCLAKMYYSAVEPTKDIFTGLIGPMKICKKGSLHANGRQKDVDKEFYLFPTVFDENESLLLEDNIRMFTTAPDQVDKEDEDFQESNKMHSMNGFMYGNQPGLTMCKGDSVVWYLFSAGNEADVHGIYFSGNTYLWRGERRDTANLFPQTSLTLHMWPDTEGTFNVECLTTDHYTGGMKQKYTVNQCRRQSEDSTFYLGERTYYIAAVEVEWDYSPQREWEKELHHLQEQNVSNAFLDKGEFYIGSKYKKVVYRQYTDSTFRVPVERKAEEEHLGILGPQLHADVGDKVKIIFKNMATRPYSIHAHGVQTESSTVTPTLPGETLTYVWKIPERSGAGTEDSACIPWAYYSTVDQVKDLYSGLIGPLIVCRRPYLKVFNPRRKLEFALLFLVFDENESWYLDDNIKTYSDHPEKVNKDDEEFIESNKMHAINGRMFGNLQGLTMHVGDEVNWYLMGMGNEIDLHTVHFHGHSFQYKHRGVYSSDVFDIFPGTYQTLEMFPRTPGIWLLHCHVTDHIHAGMETTYTVLQNEDTKSG.

Residues 1–19 (MKILILGIFLFLCSTPAWA) form the signal peptide. 2 Plastocyanin-like domains span residues 20–200 (KEKH…LIIC) and 209–357 (KEKH…VQEC). 3 residues coordinate Na(+): tyrosine 55, glycine 64, and tyrosine 67. Cu(2+) is bound by residues histidine 120 and histidine 122. Histidine 120 is a binding site for O2. Lysine 128 is a binding site for Ca(2+). Residue asparagine 138 is glycosylated (N-linked (GlcNAc...) (complex) asparagine). The Ca(2+) site is built by glutamine 143, aspartate 146, and aspartate 147. A disulfide bond links cysteine 174 and cysteine 200. Residues histidine 180 and histidine 182 each coordinate Cu(2+). Residue histidine 180 coordinates O2. Serine 256 is a Na(+) binding site. A disulfide bridge links cysteine 276 with cysteine 357. Cu(2+) contacts are provided by histidine 295, cysteine 338, and histidine 343. Asparagine 358 and asparagine 397 each carry an N-linked (GlcNAc...) (complex) asparagine glycan. 2 consecutive Plastocyanin-like domains span residues 370-560 (HVRH…MKIC) and 570-718 (RQKD…VNQC). Na(+) contacts are provided by phenylalanine 408, glycine 417, and tyrosine 420. A disulfide bridge connects residues cysteine 534 and cysteine 560. Residue asparagine 588 is glycosylated (N-linked (GlcNAc...) asparagine). A Na(+)-binding site is contributed by serine 617. Residues cysteine 637 and cysteine 718 are joined by a disulfide bond. Cu(2+) contacts are provided by histidine 656, cysteine 699, histidine 704, and methionine 709. The active-site Nucleophile; for glutathione peroxidase activity is cysteine 699. Phosphoserine; by FAM20C is present on serine 722. Plastocyanin-like domains follow at residues 730-900 (GERT…LIVC) and 908-1061 (FNPR…QNED). The N-linked (GlcNAc...) (complex) asparagine glycan is linked to asparagine 762. Positions 767, 776, and 779 each coordinate Na(+). A disulfide bond links cysteine 874 and cysteine 900. N-linked (GlcNAc...) asparagine glycosylation occurs at asparagine 926. Position 955 (serine 955) interacts with Na(+). Positions 994, 997, 999, 1039, 1040, 1041, 1045, and 1050 each coordinate Cu(2+). O2-binding residues include histidine 997 and histidine 999. Histidine 1041 serves as a coordination point for O2.

This sequence belongs to the multicopper oxidase family. In terms of assembly, found in a complex with MPO and LTF; interacts directly with MPO and LTF, which allows Fe(3+) incorporation into LTF, activation of CP ferroxidase activity and protection of CP antioxidant properties by MPO. It depends on Cu(2+) as a cofactor. Expressed by the liver and secreted in plasma.

The protein resides in the secreted. The catalysed reaction is 4 Fe(2+) + O2 + 4 H(+) = 4 Fe(3+) + 2 H2O. The enzyme catalyses 4 Cu(+) + O2 + 4 H(+) = 4 Cu(2+) + 2 H2O. It catalyses the reaction a hydroperoxide + 2 glutathione = an alcohol + glutathione disulfide + H2O. It carries out the reaction 4 nitric oxide + O2 + 2 H2O = 4 nitrite + 4 H(+). The catalysed reaction is 2 glutathione + H2O2 = glutathione disulfide + 2 H2O. In terms of biological role, multifunctional blue, copper-binding (6-7 atoms per molecule) glycoprotein. It has ferroxidase activity oxidizing Fe(2+) to Fe(3+) without releasing radical oxygen species. It is involved in iron transport across the cell membrane. Copper ions provide a large number of enzymatic activites. Oxidizes highly toxic ferrous ions to the ferric state for further incorporation onto apo-transferrins, catalyzes Cu(+) oxidation and promotes the oxidation of biogenic amines such as norepinephrin and serotonin. Provides Cu(2+) ions for the ascorbate-mediated deaminase degradation of the heparan sulfate chains of GPC1. Has glutathione peroxidase-like activity, can remove both hydrogen peroxide and lipid hydroperoxide in the presence of thiols. Also shows NO-oxidase and NO2 synthase activities that determine endocrine NO homeostasis. The protein is Ceruloplasmin of Homo sapiens (Human).